The sequence spans 426 residues: MQVKLKVLLIGSGGRESAIAFYLRKSVLLSELKVFPGNGGFPDQELLPPDSFQVLDKNSVQSFLKQNPFDLIVVGPEDPLVAGFADWAAELNIPVFGPDSFCAQVEGSKDFAKSLMTEAKIPTAEYKTFSEYSDSLKYLESKSIPIVIKADGLAAGKGVTVATSKEMAQTALKEIFKDKKFGSSGNQVVIEEFMEGQEASIFAISDGDSYFLLPAAQDHKRAFDGDQGPNTGGMGAYCPAPVISESILQKVKEQIFDPMFDLFRKKGHPYRGLLYAGLMISPNGEPKVVEFNCRFGDPETQCVLAMLDGDLLELLYRASTGKIKGIQAAVKKGAAVVVVLAAQGYPDFYEKNIPLNLPETSGQNVHLFHAGTLKKDGKVFSSGGRILGIVAQGADLKSSVDQAYSFLEKIQAPKTFYRKDIGYRAL.

Residues 113–320 form the ATP-grasp domain; it reads KSLMTEAKIP…LLELLYRAST (208 aa). ATP is bound at residue 139–200; that stretch reads LESKSIPIVI…EEFMEGQEAS (62 aa). Mg(2+) contacts are provided by glutamate 290 and asparagine 292.

It belongs to the GARS family. Requires Mg(2+) as cofactor. Mn(2+) serves as cofactor.

The catalysed reaction is 5-phospho-beta-D-ribosylamine + glycine + ATP = N(1)-(5-phospho-beta-D-ribosyl)glycinamide + ADP + phosphate + H(+). The protein operates within purine metabolism; IMP biosynthesis via de novo pathway; N(1)-(5-phospho-D-ribosyl)glycinamide from 5-phospho-alpha-D-ribose 1-diphosphate: step 2/2. In Leptospira interrogans serogroup Icterohaemorrhagiae serovar copenhageni (strain Fiocruz L1-130), this protein is Phosphoribosylamine--glycine ligase.